The primary structure comprises 101 residues: Small ribosomal subunit protein uS14 (101 aa).

The protein belongs to the universal ribosomal protein uS14 family. In terms of assembly, part of the 30S ribosomal subunit. Contacts proteins S3 and S10.

Its function is as follows. Binds 16S rRNA, required for the assembly of 30S particles and may also be responsible for determining the conformation of the 16S rRNA at the A site. This chain is Small ribosomal subunit protein uS14, found in Psychromonas ingrahamii (strain DSM 17664 / CCUG 51855 / 37).